The sequence spans 355 residues: Phosphoribosylformylglycinamidine cyclo-ligase (355 aa).

Belongs to the AIR synthase family.

It is found in the cytoplasm. It carries out the reaction 2-formamido-N(1)-(5-O-phospho-beta-D-ribosyl)acetamidine + ATP = 5-amino-1-(5-phospho-beta-D-ribosyl)imidazole + ADP + phosphate + H(+). The protein operates within purine metabolism; IMP biosynthesis via de novo pathway; 5-amino-1-(5-phospho-D-ribosyl)imidazole from N(2)-formyl-N(1)-(5-phospho-D-ribosyl)glycinamide: step 2/2. The sequence is that of Phosphoribosylformylglycinamidine cyclo-ligase from Methylobacterium nodulans (strain LMG 21967 / CNCM I-2342 / ORS 2060).